Reading from the N-terminus, the 24-residue chain is Brevinin-1Bb (24 aa).

Cysteine 18 and cysteine 24 are joined by a disulfide.

Expressed by the skin glands.

It localises to the secreted. Antibacterial activity against Gram-positive bacterium S.aureus and Gram-negative bacterium E.coli. Has activity against C.albicans. This is Brevinin-1Bb from Lithobates berlandieri (Rio Grande leopard frog).